The primary structure comprises 342 residues: Polygalacturonase inhibitor 2 (342 aa).

The signal sequence occupies residues 1 to 29; that stretch reads MTQFNIPVTMSSSLSIILVILVSLSTAHS. 2 cysteine pairs are disulfide-bonded: Cys-32/Cys-62 and Cys-63/Cys-72. N-linked (GlcNAc...) (complex) asparagine glycosylation occurs at Asn-64. 10 LRR repeats span residues 82 to 107, 108 to 132, 133 to 156, 157 to 180, 181 to 205, 206 to 228, 229 to 252, 253 to 275, 276 to 299, and 300 to 319; these read NNLDLSGLNLPKPYPIPSSLANLPYL, NFLYIGGINNLVGPIPPAIAKLTQL, HYLYITHTNVSGAIPDFLSQIKTL, VTLDFSYNALSGTLPPSISSLPNL, VGITFDGNRISGAIPDSYGSFSKLF, TSMTISRNRLTGKIPPTFANLNL, AFVDLSRNMLEGDASVLFGSDKNT, QKIHLAKNSLAFDLGKVGLSKNL, NGLDLRNNRIYGTLPQGLTQLKFL, and HSLNVSFNNLCGEIPQGGNL. Asn-141 carries N-linked (GlcNAc...) (complex) asparagine glycosylation. N-linked (GlcNAc...) asparagine glycosylation is present at Asn-303. 2 disulfide bridges follow: Cys-310–Cys-332 and Cys-334–Cys-341.

This sequence belongs to the polygalacturonase-inhibiting protein family. Post-translationally, asn-303 is not glycosylated.

It localises to the secreted. Its subcellular location is the cell wall. It is found in the membrane. Functionally, inhibitor of fungal polygalacturonase. It is an important factor for plant resistance to phytopathogenic fungi. Inhibits all polygalacturonases (PG) tested, with the exception of PG from F.oxysporum which was only inhibited at 60%. The chain is Polygalacturonase inhibitor 2 (PGIP2) from Phaseolus vulgaris (Kidney bean).